A 100-amino-acid polypeptide reads, in one-letter code: Small ribosomal subunit protein bS18c (100 aa).

A compositionally biased stretch (basic residues) spans 1–19 (MDKSKRPFRKSKRSFRRRL). The tract at residues 1–23 (MDKSKRPFRKSKRSFRRRLPPIG) is disordered.

It belongs to the bacterial ribosomal protein bS18 family. Part of the 30S ribosomal subunit.

It is found in the plastid. The protein localises to the chloroplast. This is Small ribosomal subunit protein bS18c from Calycanthus floridus var. glaucus (Eastern sweetshrub).